Reading from the N-terminus, the 1455-residue chain is Membrane-associated guanylate kinase, WW and PDZ domain-containing protein 2 (1455 aa).

One can recognise a PDZ 1 domain in the interval 17-101 (ESVIGRNPEG…PLRLKCVKQG (85 aa)). The Guanylate kinase-like domain occupies 109 to 283 (RHYLNLRFQK…APVYSQPEEL (175 aa)). The segment at 205 to 306 (PGATPSAEGK…DNEEPDPLPD (102 aa)) is disordered. The span at 241 to 252 (VVNGNGVVVTPE) shows a compositional bias: low complexity. The span at 281-296 (EELKEQMDDTKPTKPE) shows a compositional bias: basic and acidic residues. 2 WW domains span residues 302–335 (DPLP…DPRL) and 348–381 (NELP…NPVL). Residues 302-381 (DPLPDNWEMA…RRTQFENPVL (80 aa)) are interaction with DDN. A Phosphotyrosine modification is found at tyrosine 362. PDZ domains follow at residues 426 to 510 (STTL…CRGY) and 605 to 683 (TLTI…HRGG). Serine 686 carries the phosphoserine modification. Residues 778–860 (DVHLRRMESG…NGQVNLTVRR (83 aa)) enclose the PDZ 4 domain. The residue at position 827 (tyrosine 827) is a Phosphotyrosine. The tract at residues 869 to 913 (CPENGRSPGSVSTHHSSPRSDYATYTNSNHAAPSSNASPPEGFAS) is disordered. Serine 884 and serine 885 each carry phosphoserine. Low complexity predominate over residues 895 to 908 (NSNHAAPSSNASPP). Positions 920-1010 (DVVIHRKENE…SVTLRIIPQE (91 aa)) constitute a PDZ 5 domain. The span at 1011 to 1040 (ELNSPTSAPSSEKQSPMAQQSPLAQQSPLA) shows a compositional bias: polar residues. The disordered stretch occupies residues 1011 to 1136 (ELNSPTSAPS…PDTRQYPLSD (126 aa)). Position 1014 is a phosphoserine (serine 1014). Positions 1067 to 1083 (NSYRSEVKARQDVKPDI) are enriched in basic and acidic residues. Residues 1147–1229 (TVDMEKGAKG…RVRLLLKRGT (83 aa)) form the PDZ 6 domain. Positions 1231 to 1455 (QVPEYDEPAP…LKPGASAASR (225 aa)) are disordered. Over residues 1238–1249 (PAPWSSPAAAAP) the composition is skewed to low complexity. The segment covering 1287–1299 (DIKREHDVRKPKE) has biased composition (basic and acidic residues). 3 stretches are compositionally biased toward low complexity: residues 1346–1363 (EARA…AARA), 1399–1412 (ALEA…RAGP), and 1422–1433 (APARKAAVAPGP).

This sequence belongs to the MAGUK family. In terms of assembly, interacts (via its WW domains) with DRPLA. Interacts (via its second PDZ domain) with PTEN (via unphosphorylated C-terminus); this interaction diminishes the degradation rate of PTEN. Interacts (via guanylate kinase domain) with DLGAP1. Interacts (via the PDZ domains) with GRIN2A, GRID2 and NLGN1. Interacts with CTNND2, CTNNB1, MAGUIN-1, ACVR2A, SMAD2 and SMAD3. Part of a complex consisting of MAGI2/ARIP1, ACVR2A, ACVR1B and SMAD3. May interact with HTR2A. Interacts with IGSF9, RAPGEF2 and HTR4. Identified in a complex with ACTN4, CASK, IQGAP1, NPHS1, SPTAN1 and SPTBN1. Found in a complex, at least composed of KIDINS220, MAGI2, NTRK1 and RAPGEF2; the complex is mainly formed at late endosomes in a NGF-dependent manner. Interacts with RAPGEF2; the interaction occurs before or after nerve growth factor (NGF) stimulation. Interacts (via PDZ domain) with KIDINS220 (via C-terminal domain). Interacts with DDN. Interacts with DLL1. Found in a complex with IGSF9B and NLGN2; the interaction with IGSF9B is mediated via the PDZ 5 and PDZ 6 domains, while the interaction with NLGN2 is mediated via the WW1, WW2 and PDZ2 domains. Interacts (via PDZ 6 domain) with USH1G (via SAM domain); the interaction is triggered by phosphorylation of USH1G by CK2 and negatively regulates MAGI2-mediated endocytosis. In terms of tissue distribution, specifically expressed in brain.

Its subcellular location is the cytoplasm. It localises to the late endosome. It is found in the synapse. The protein resides in the synaptosome. The protein localises to the cell membrane. Its subcellular location is the cytoskeleton. It localises to the microtubule organizing center. It is found in the centrosome. The protein resides in the cell projection. The protein localises to the cilium. Its subcellular location is the centriole. It localises to the photoreceptor inner segment. It is found in the photoreceptor outer segment. Its function is as follows. Seems to act as a scaffold molecule at synaptic junctions by assembling neurotransmitter receptors and cell adhesion proteins. Plays a role in nerve growth factor (NGF)-induced recruitment of RAPGEF2 to late endosomes and neurite outgrowth. May play a role in regulating activin-mediated signaling in neuronal cells. Enhances the ability of PTEN to suppress AKT1 activation. Plays a role in receptor-mediated clathrin-dependent endocytosis which is required for ciliogenesis. This chain is Membrane-associated guanylate kinase, WW and PDZ domain-containing protein 2 (MAGI2), found in Homo sapiens (Human).